Here is a 191-residue protein sequence, read N- to C-terminus: Gastrokine-3 (191 aa).

A signal peptide spans 1 to 30 (MPLHSLERDNMRRLIAPSILVTVFLVPALA). A glycan (N-linked (GlcNAc...) asparagine) is linked at Asn33. One can recognise a BRICHOS domain in the interval 63–155 (NSVQSEWDGV…LCRAVPTYFA (93 aa)). A disulfide bond links Cys90 and Cys147.

It belongs to the gastrokine family. Expressed in stomach. Present in mucus cells at the base of antral glands, and Brunner glands of the duodenum. Present at lower levels in the mucus neck cell region of the fundus (at protein level).

The protein localises to the secreted. In terms of biological role, inhibits gastric epithelial cell proliferation. This chain is Gastrokine-3 (Gkn3), found in Mus musculus (Mouse).